The primary structure comprises 463 residues: Argininosuccinate lyase (463 aa).

This sequence belongs to the lyase 1 family. Argininosuccinate lyase subfamily.

It is found in the cytoplasm. The catalysed reaction is 2-(N(omega)-L-arginino)succinate = fumarate + L-arginine. It participates in amino-acid biosynthesis; L-arginine biosynthesis; L-arginine from L-ornithine and carbamoyl phosphate: step 3/3. The chain is Argininosuccinate lyase from Thermosynechococcus vestitus (strain NIES-2133 / IAM M-273 / BP-1).